Consider the following 179-residue polypeptide: Enhancer of split m8 protein (179 aa).

A bHLH domain is found at 10–65 (YQKVKKPMLERQRRARMNKCLDNLKTLVAELRGDDGILRMDKAEMLESAVIFMRQQ). One can recognise an Orange domain in the interval 83 to 116 (FKNGYMNAVNEVSRVMASTPGMSVDLGKSVMTHL). The interval 146 to 179 (DKAPLSPASSGYHSDCDSPAPSPQPMQQPLWRPW) is disordered. The short motif at 176-179 (WRPW) is the WRPW motif element.

In terms of assembly, homodimer. Heterodimers with dpn. Transcription repression requires formation of a complex with a corepressor protein (Groucho).

The protein localises to the nucleus. Its function is as follows. Participates in the control of cell fate choice by uncommitted neuroectodermal cells in the embryo. Transcriptional repressor. Binds DNA on N-box motifs: 5'-CACNAG-3'. Part of the Notch signaling pathway. The chain is Enhancer of split m8 protein from Drosophila melanogaster (Fruit fly).